We begin with the raw amino-acid sequence, 172 residues long: MVDKRESYTKEDLLASGRGELFGAKGPQLPAPNMLMMDRVVKMTETGGNFDKGYVEAELDINPDLWFFGCHFIGDPVMPGCLGLDAMWQLVGFYLGWLGGEGKGRALGVGEVKFTGQVLPTARKVTYRIHFKRIVNRRLIMGLADGEVLVDGRLIYTAHDLKVGLFQDTSAF.

The active site involves His71.

Belongs to the thioester dehydratase family. FabA subfamily. As to quaternary structure, homodimer.

Its subcellular location is the cytoplasm. It catalyses the reaction a (3R)-hydroxyacyl-[ACP] = a (2E)-enoyl-[ACP] + H2O. The catalysed reaction is (3R)-hydroxydecanoyl-[ACP] = (2E)-decenoyl-[ACP] + H2O. The enzyme catalyses (2E)-decenoyl-[ACP] = (3Z)-decenoyl-[ACP]. It functions in the pathway lipid metabolism; fatty acid biosynthesis. Its function is as follows. Necessary for the introduction of cis unsaturation into fatty acids. Catalyzes the dehydration of (3R)-3-hydroxydecanoyl-ACP to E-(2)-decenoyl-ACP and then its isomerization to Z-(3)-decenoyl-ACP. Can catalyze the dehydratase reaction for beta-hydroxyacyl-ACPs with saturated chain lengths up to 16:0, being most active on intermediate chain length. The chain is 3-hydroxydecanoyl-[acyl-carrier-protein] dehydratase from Salmonella agona (strain SL483).